Consider the following 381-residue polypeptide: Phosphatidyl-myo-inositol mannosyltransferase (381 aa).

GDP-alpha-D-mannose-binding residues include Tyr9 and Gly16. Residues Gln18, 69–70 (FN), and Arg75 contribute to the a 1,2-diacyl-sn-glycero-3-phospho-(1D-myo-inositol) site. GDP-alpha-D-mannose-binding positions include Arg204, 209–210 (RK), 251–253 (LDD), Arg256, 274–278 (ESFGI), and Glu282.

This sequence belongs to the glycosyltransferase group 1 family. Glycosyltransferase 4 subfamily. As to quaternary structure, monomer. The cofactor is Mg(2+).

The protein resides in the cell membrane. It carries out the reaction a 1,2-diacyl-sn-glycero-3-phospho-(1D-myo-inositol) + GDP-alpha-D-mannose = a 1,2-diacyl-sn-glycero-3-phospho-[alpha-D-mannopyranosyl-(1&lt;-&gt;6)-D-myo-inositol] + GDP + H(+). The protein operates within phospholipid metabolism; phosphatidylinositol metabolism. Involved in the biosynthesis of phosphatidyl-myo-inositol mannosides (PIM) which are early precursors in the biosynthesis of lipomannans (LM) and lipoarabinomannans (LAM). Catalyzes the addition of a mannosyl residue from GDP-D-mannose (GDP-Man) to the position 2 of the carrier lipid phosphatidyl-myo-inositol (PI) to generate a phosphatidyl-myo-inositol bearing an alpha-1,2-linked mannose residue (PIM1). This Propionibacterium freudenreichii subsp. shermanii (strain ATCC 9614 / DSM 4902 / CIP 103027 / NCIMB 8099 / CIRM-BIA1) protein is Phosphatidyl-myo-inositol mannosyltransferase.